Reading from the N-terminus, the 75-residue chain is UPF0346 protein LEUM_0763 (75 aa).

Belongs to the UPF0346 family.

This Leuconostoc mesenteroides subsp. mesenteroides (strain ATCC 8293 / DSM 20343 / BCRC 11652 / CCM 1803 / JCM 6124 / NCDO 523 / NBRC 100496 / NCIMB 8023 / NCTC 12954 / NRRL B-1118 / 37Y) protein is UPF0346 protein LEUM_0763.